Consider the following 245-residue polypeptide: tRNA1(Val) (adenine(37)-N6)-methyltransferase (245 aa).

Belongs to the methyltransferase superfamily. tRNA (adenine-N(6)-)-methyltransferase family.

It is found in the cytoplasm. The enzyme catalyses adenosine(37) in tRNA1(Val) + S-adenosyl-L-methionine = N(6)-methyladenosine(37) in tRNA1(Val) + S-adenosyl-L-homocysteine + H(+). Its function is as follows. Specifically methylates the adenine in position 37 of tRNA(1)(Val) (anticodon cmo5UAC). This chain is tRNA1(Val) (adenine(37)-N6)-methyltransferase, found in Escherichia fergusonii (strain ATCC 35469 / DSM 13698 / CCUG 18766 / IAM 14443 / JCM 21226 / LMG 7866 / NBRC 102419 / NCTC 12128 / CDC 0568-73).